The chain runs to 885 residues: DNA replication licensing factor REC (885 aa).

Residues 36-76 (RVIPAGGNRQPNQGEPGAPDAPSVPPATRQPRGWSRTAGKR) form a disordered region. A C4-type zinc finger spans residues 281–308 (CSRCQMEIAMRQRGTFQPRPYQCKRSEC). Residues 430–627 (SFKLLVQSIA…ERDMSLTAHV (198 aa)) form the MCM domain. ATP is bound at residue 473–480 (GDPGIGKT). The span at 796–805 (SLKEGSSRQG) shows a compositional bias: polar residues. The tract at residues 796–818 (SLKEGSSRQGTRGGGGAGGGAGK) is disordered. Residues 806-817 (TRGGGGAGGGAG) show a composition bias toward gly residues.

This sequence belongs to the MCM family.

It is found in the nucleus. Its function is as follows. Required for meiotic DNA recombination in females. Probably not involved in DNA repair and recombination in somatic cells. This Drosophila melanogaster (Fruit fly) protein is DNA replication licensing factor REC (rec).